A 265-amino-acid chain; its full sequence is Synaptoporin (265 aa).

The Cytoplasmic segment spans residues 1-4 (MCMV). The region spanning 1 to 202 (MCMVIFAPLF…NIWFVFKETG (202 aa)) is the MARVEL domain. A helical transmembrane segment spans residues 5–25 (IFAPLFAIFAFATCGGYSGGL). Topologically, residues 26 to 81 (RLSVDCVNKTESNLSIDIAFAYPFRLHQVTFEVPTCEGKERQKLALVGDSSSSAEF) are vesicular. Asparagine 33 and asparagine 38 each carry an N-linked (GlcNAc...) asparagine glycan. A helical membrane pass occupies residues 82 to 102 (FVTVAVFAFLYSLAATVVYIF). Residues 103–114 (FQNKYRENNRGP) are Cytoplasmic-facing. The helical transmembrane segment at 115 to 135 (LIDFIVTVVFSFLWLVGSSAW) threads the bilayer. Topologically, residues 136 to 177 (AKGLSDVKVATDPKEVLLLMSACKQPSNKCMAVHSPVMSSLN) are vesicular. The N-linked (GlcNAc...) asparagine glycan is linked to asparagine 177. Residues 178 to 198 (TSVVFGFLNFILWAGNIWFVF) form a helical membrane-spanning segment. At 199-265 (KETGWHSSGQ…SGPTSFNNQI (67 aa)) the chain is on the cytoplasmic side. Copy 1 of the repeat occupies 210 to 214 (YLSDP). The segment at 210-242 (YLSDPMEKHSSSYNQGGYNQDSYGSSGGYSQQA) is 5 X approximate repeats. Residues serine 212 and serine 220 each carry the phosphoserine modification. Residues 221–265 (SYNQGGYNQDSYGSSGGYSQQASLGPTSDEFGQQPSGPTSFNNQI) form a disordered region. 4 consecutive repeat copies span residues 222-226 (YNQGG), 227-231 (YNQDS), 232-236 (YGSSG), and 238-242 (YSQQA). Over residues 224-243 (QGGYNQDSYGSSGGYSQQAS) the composition is skewed to low complexity. Polar residues predominate over residues 244–265 (LGPTSDEFGQQPSGPTSFNNQI).

The protein belongs to the synaptophysin/synaptobrevin family. Central nervous system.

The protein localises to the cytoplasmic vesicle. It localises to the secretory vesicle. The protein resides in the synaptic vesicle membrane. It is found in the synapse. Its subcellular location is the synaptosome. Intrinsic membrane protein of small synaptic vesicles. Probable vesicular channel protein. This is Synaptoporin (Synpr) from Rattus norvegicus (Rat).